A 150-amino-acid polypeptide reads, in one-letter code: Large ribosomal subunit protein bL9 (150 aa).

It belongs to the bacterial ribosomal protein bL9 family.

Binds to the 23S rRNA. This is Large ribosomal subunit protein bL9 from Vibrio parahaemolyticus serotype O3:K6 (strain RIMD 2210633).